A 286-amino-acid polypeptide reads, in one-letter code: Transmembrane protein 156 (286 aa).

Residues 1–4 (MTET) lie on the Cytoplasmic side of the membrane. The helical transmembrane segment at 5 to 25 (AFLKLFVAIVITFILVLPEFF) threads the bilayer. The Extracellular segment spans residues 26–214 (KTPKERTLEL…KSVTCSMKIT (189 aa)). Asn-45, Asn-54, Asn-76, and Asn-142 each carry an N-linked (GlcNAc...) asparagine glycan. A helical membrane pass occupies residues 215–235 (WYVLVLFVFMLGIIFIIYKIL). Topologically, residues 236-286 (EEHRRVWRRQSHNYKSSSVLFRGHDSGKLSTLNVRVIPGYPWTIWTRDFDE) are cytoplasmic.

The protein localises to the membrane. In Rattus norvegicus (Rat), this protein is Transmembrane protein 156 (Tmem156).